The following is a 471-amino-acid chain: Glutamate--tRNA ligase (471 aa).

The short motif at 9-19 (PSPTGYLHVGG) is the 'HIGH' region element. 4 residues coordinate Zn(2+): cysteine 98, cysteine 100, cysteine 125, and histidine 127. The 'KMSKS' region motif lies at 237-241 (KLSKR). Lysine 240 serves as a coordination point for ATP.

Belongs to the class-I aminoacyl-tRNA synthetase family. Glutamate--tRNA ligase type 1 subfamily. Monomer. Requires Zn(2+) as cofactor.

The protein resides in the cytoplasm. The catalysed reaction is tRNA(Glu) + L-glutamate + ATP = L-glutamyl-tRNA(Glu) + AMP + diphosphate. In terms of biological role, catalyzes the attachment of glutamate to tRNA(Glu) in a two-step reaction: glutamate is first activated by ATP to form Glu-AMP and then transferred to the acceptor end of tRNA(Glu). This chain is Glutamate--tRNA ligase, found in Salmonella enteritidis PT4 (strain P125109).